The chain runs to 81 residues: U-megalopygitoxin(3)-Mo4 (81 aa).

Positions 1–20 (MNSKFVLIVVFLAVVSICFA) are cleaved as a signal peptide.

Belongs to the caterpillar 3 family. Post-translationally, contains 3 disulfide bonds. In terms of tissue distribution, expressed by the venom apparatus.

Its subcellular location is the secreted. Functionally, probable toxin. This chain is U-megalopygitoxin(3)-Mo4, found in Megalopyge opercularis (Southern flannel moth).